Here is a 446-residue protein sequence, read N- to C-terminus: sn-2 acyl-lipid omega-3 desaturase (ferredoxin), chloroplastic (446 aa).

The transit peptide at 1–65 (MANLVLSECG…DGFTRNWALN (65 aa)) directs the protein to the chloroplast. 2 consecutive transmembrane segments (helical) span residues 118–138 (LSYVVRDVAIVFALAAGAAYL) and 141–161 (WIVWPLYWLAQGTMFWALFVL). The Histidine box-1 signature appears at 163 to 167 (HDCGH). Residues 199-203 (HRTHH) carry the Histidine box-2 motif. A run of 3 helical transmembrane segments spans residues 231 to 250 (RFFRFTLPLVMLAYPFYLWA), 279 to 299 (TACWTAMAALLVCLNFTIGPI), and 302 to 322 (LKLYGIPYWINVMWLDFVTYL). The short motif at 366–370 (HVIHH) is the Histidine box-3 element.

Belongs to the fatty acid desaturase type 1 family. As to expression, most abundant in leaves and seedlings.

The protein localises to the plastid. It localises to the chloroplast inner membrane. It carries out the reaction a (7Z,10Z)-hexadecadienoyl-containing glycerolipid + 2 reduced [2Fe-2S]-[ferredoxin] + O2 + 2 H(+) = a (7Z,10Z,13Z)-hexadecatrienoyl-containing glycerolipid + 2 oxidized [2Fe-2S]-[ferredoxin] + 2 H2O. It catalyses the reaction a (9Z,12Z)-octadecadienoyl-containing glycerolipid + 2 reduced [2Fe-2S]-[ferredoxin] + O2 + 2 H(+) = (9Z,12Z,15Z)-octadecatrienoyl-containing glycerolipid + 2 oxidized [2Fe-2S]-[ferredoxin] + 2 H2O. It functions in the pathway lipid metabolism; polyunsaturated fatty acid biosynthesis. Chloroplast omega-3 fatty acid desaturase introduces the third double bond in the biosynthesis of 16:3 and 18:3 fatty acids, important constituents of plant membranes. It is thought to use ferredoxin as an electron donor and to act on fatty acids esterified to galactolipids, sulfolipids and phosphatidylglycerol. The sequence is that of sn-2 acyl-lipid omega-3 desaturase (ferredoxin), chloroplastic from Arabidopsis thaliana (Mouse-ear cress).